We begin with the raw amino-acid sequence, 303 residues long: MTSAYCTVLSKGRLYQAVALFKSLEQVDQDSPIFILCMDEDTHRVLQKLKMKQLNLVPVAALENELLLKLKETRDQSEYCWTMKPIFLQAVLNSNPELERVTYIDGDLFFYADPSPIFENQPDCSVLLSRGDIVIPSFEKEQIDMLQRLLGRYNSGFISFKHDDAGTDCLEWWKERCLEECKNAPGEGKFGDQGYLDYMSELFPNVCDITTPGVNIGHWNYGQHTFSWKDGRIVLEDGSPLIFYHFSGYRIVSINEIKQIHETTRTDLPFVHELYQETLPHIIQHMQTLDPEFNGFASKDDNK.

This is an uncharacterized protein from Bacillus subtilis (strain 168).